The chain runs to 144 residues: Snaclec coagulation factor IX/factor X-binding protein subunit B1 (144 aa).

Residues 1–23 (MGRFIFVSFGLLVVFLSLSGTAA) form the signal peptide. 3 disulfide bridges follow: cysteine 25–cysteine 36, cysteine 53–cysteine 142, and cysteine 119–cysteine 134. One can recognise a C-type lectin domain in the interval 32–143 (YEGHCYKPFN…CRMMANFVCE (112 aa)).

Belongs to the snaclec family. Heterodimer of subunits A and B1; disulfide-linked. As to expression, expressed by the venom gland.

The protein localises to the secreted. In terms of biological role, anticoagulant protein which binds to the gamma-carboxyglutamic acid-domain regions of factors IX (F9) and factor X (F10) in the presence of calcium with a 1 to 1 stoichiometry. The chain is Snaclec coagulation factor IX/factor X-binding protein subunit B1 from Trimeresurus stejnegeri (Chinese green tree viper).